Consider the following 75-residue polypeptide: Mating pheromone Er-1/Er-3 (75 aa).

An N-terminal signal peptide occupies residues 1-19 (MNKLAILAIIAMVLFSANA). Positions 20-35 (FRFQSRLRSNVEAKTG) are excised as a propeptide. Disulfide bonds link cysteine 38/cysteine 54, cysteine 45/cysteine 71, and cysteine 50/cysteine 63.

As to quaternary structure, homodimer.

The protein localises to the secreted. It is found in the cell membrane. Functionally, mating ciliate pheromones (or gamones) are diffusible extracellular communication signals that distinguish different intraspecific classes of cells commonly referred to as 'mating types'. They prepare the latter for conjugation by changing their cell surface properties. The membrane-bound form promotes inter-cellular communication and adhesion for mating pair formation and may act as binding site for the secreted form. The chain is Mating pheromone Er-1/Er-3 (MAT1) from Euplotes raikovi.